The chain runs to 244 residues: Thiol S-methyltransferase TMT1A (244 aa).

The segment at 1–28 is targeting to lipid droplets; that stretch reads MELTIFILRLAIYILTFPLYLLNFLGLW. A signal peptide spans 1–29; sequence MELTIFILRLAIYILTFPLYLLNFLGLWS.

Belongs to the methyltransferase superfamily. In terms of assembly, (Microbial infection) Interacts with HCV non-structural protein 4B/NS4B (via C-terminal region); this interaction may promote the recruitment of NS4B in the proximity of lipid droplet. As to quaternary structure, self-associates. Interacts with SNRNP200; this interaction may promote the odontogenic differentiation. Methylated at lysine residues most likely by EZH2. Expressed in the liver.

Its subcellular location is the lipid droplet. It is found in the endoplasmic reticulum. The protein resides in the membrane. The protein localises to the microsome. It localises to the cytoplasm. Its subcellular location is the cytosol. The catalysed reaction is a thiol + S-adenosyl-L-methionine = a methyl thioether + S-adenosyl-L-homocysteine + H(+). It carries out the reaction an adenosine in mRNA + S-adenosyl-L-methionine = an N(6)-methyladenosine in mRNA + S-adenosyl-L-homocysteine + H(+). Its activity is regulated as follows. Inhibited by 2,3-dichloro-alpha-methylbenzylamine (DCMB). Thiol S-methyltransferase that catalyzes the transfer of a methyl group from S-adenosyl-L-methionine to alkyl and phenolic thiol-containing acceptor substrates. Together with TMT1B accounts for most of S-thiol methylation activity in the endoplasmic reticulum of hepatocytes. Able to methylate the N6 position of adenosine residues in long non-coding RNAs (lncRNAs). May facilitate lncRNAs transfer into exosomes at the tumor-stroma interface. Promotes osteogenic and odontogenic differentiation by regulating the expression of genes involved in stem cell differentiation and survival. Targeted from the endoplasmic reticulum to lipid droplets, where it recruits cellular proteins to form functional organelles. Its function is as follows. (Microbial infection) May be involved in the assembly and release stages of hepatitis C virus (HCV) life cycle and thus play a crucial role in HCV propagation. The polypeptide is Thiol S-methyltransferase TMT1A (Homo sapiens (Human)).